Reading from the N-terminus, the 151-residue chain is Ribosome maturation factor RimP (151 aa).

This sequence belongs to the RimP family.

It is found in the cytoplasm. In terms of biological role, required for maturation of 30S ribosomal subunits. The sequence is that of Ribosome maturation factor RimP from Alcanivorax borkumensis (strain ATCC 700651 / DSM 11573 / NCIMB 13689 / SK2).